Consider the following 384-residue polypeptide: Spermidine/putrescine import ATP-binding protein PotA (384 aa).

An ABC transporter domain is found at 26-260 (ISLEKVSKTY…PATRFVAGFI (235 aa)). ATP is bound at residue 62–69 (GPSGCGKT).

It belongs to the ABC transporter superfamily. Spermidine/putrescine importer (TC 3.A.1.11.1) family. As to quaternary structure, the complex is composed of two ATP-binding proteins (PotA), two transmembrane proteins (PotB and PotC) and a solute-binding protein (PotD).

The protein resides in the cell membrane. The catalysed reaction is ATP + H2O + polyamine-[polyamine-binding protein]Side 1 = ADP + phosphate + polyamineSide 2 + [polyamine-binding protein]Side 1.. In terms of biological role, part of the ABC transporter complex PotABCD involved in spermidine/putrescine import. Responsible for energy coupling to the transport system. The sequence is that of Spermidine/putrescine import ATP-binding protein PotA from Thermobifida fusca (strain YX).